We begin with the raw amino-acid sequence, 74 residues long: RNA-binding protein Hfq (74 aa).

A Sm domain is found at 9-69; sequence DQFLNQLRKD…ISTFAPEKNV (61 aa).

This sequence belongs to the Hfq family. In terms of assembly, homohexamer.

RNA chaperone that binds small regulatory RNA (sRNAs) and mRNAs to facilitate mRNA translational regulation in response to envelope stress, environmental stress and changes in metabolite concentrations. Also binds with high specificity to tRNAs. In Geobacillus sp. (strain WCH70), this protein is RNA-binding protein Hfq.